A 449-amino-acid polypeptide reads, in one-letter code: Agmatine hydroxycinnamoyltransferase 1 (449 aa).

Active-site proton acceptor residues include His153 and Asp392.

Belongs to the plant acyltransferase family. As to expression, highly expressed in roots. Expressed at low levels in flowers.

Hydroxycinnamoyl transferase that catalyzes the transfer of an acyl from p-coumaryol-CoA to agmatine, to produce coumaroyl agmatine. Can use feruloyl-CoA, caffeoyl-CoA and sinapoyl-CoA as acyl donors. Seems to be able to transfer the acyl group from p-coumaroyl-CoA and feruloyl-CoA to the acyl acceptors putrescine and spermidine. The polypeptide is Agmatine hydroxycinnamoyltransferase 1 (Oryza sativa subsp. japonica (Rice)).